A 1383-amino-acid polypeptide reads, in one-letter code: Periaxin (1383 aa).

Ser7 bears the Phosphoserine mark. Positions 16–99 (LVEIIVETEA…YKVSFCLKRT (84 aa)) constitute a PDZ domain. The Nuclear export signal motif lies at 70–84 (VFFENFKYEDALRLL). 2 positions are modified to phosphoserine: Ser133 and Ser243. 46 tandem repeats follow at residues 432–436 (GPEVK), 440–444 (GPEVK), 448–452 (VPEIK), 456–460 (APEAA), 461–465 (IPDVQ), 466–470 (LPEVQ), 474–478 (MSDMK), 482–486 (IPEMA), 487–491 (VPDVH), 492–496 (LPEVK), 497–501 (LPKVP), 502–506 (EMKVP), 507–511 (EMKLP), 515–519 (EMAVP), 523–527 (LPDIQ), 531–535 (VPEMK), 536–540 (LPDMK), 544–548 (VPEMA), 549–553 (VPDVH), 554–558 (LPDIQ), 562–566 (VPEMK), 567–571 (LPDMK), 575–579 (VPEMA), 580–584 (VPDVR), 585–589 (IPEVQ), 593–597 (VSEVK), 601–605 (IPDMA), 606–610 (VPDVR), 611–615 (LPELQ), 619–623 (MSEVK), 627–631 (IPDMA), 632–636 (VPDVR), 637–641 (LPEVQ), 645–649 (VSELK), 653–657 (VPEMT), 658–662 (MPDIR), 663–667 (LPEVQ), 671–675 (VPDIK), 676–680 (LPEIK), 684–688 (VPEMA), 689–693 (VPDVP), 694–698 (LPELQ), 699–703 (LPKVP), 705–709 (VPDVH), 713–717 (VPEMK), and 718–722 (LPKVP). A 46 X 5 AA approximate tandem repeats of [LVMGIE]-[PSM]-[EDKA]-[LIVMA]-[AQKHPRT]; that may have a tripeptide spacer of [ALKD]-[IPV]-[KPH] region spans residues 432-722 (GPEVKAPKGP…VPEMKLPKVP (291 aa)). Phosphoserine is present on residues Ser838, Ser971, Ser1020, Ser1271, Ser1275, Ser1277, Ser1285, Ser1323, and Ser1329. Residues 1251-1383 (KVKSPKLRLP…RIEGTQAAAI (133 aa)) are disordered. Positions 1267 to 1277 (SESASGEGSPS) are enriched in low complexity. Residues 1346-1355 (GSKDREEGGF) show a composition bias toward basic and acidic residues. Ser1361 carries the phosphoserine modification.

The protein belongs to the periaxin family. As to quaternary structure, homodimer (via PDZ domain). Interacts with SCN10A. Found in a complex with SCN10A. Interacts with DRP2. Identified in a dystroglycan complex that contains at least PRX, DRP2, UTRN, DMD and DAG1. Detected in a complex composed of at least EZR, AHNAK, PPL and PRX. Identified in a complex with EZR, AHNAK, BFSP1, BFSP2, ANK2, PLEC, VIM and spectrin. The N-terminus is blocked. Detected in sciatic nerve and in trigeminal nerve Schwann cells. Detected in myelinating Schwann cells in sciatic nerve (at protein level).

It localises to the nucleus. The protein resides in the cytoplasm. Its subcellular location is the cell membrane. It is found in the cell junction. Its function is as follows. Scaffolding protein that functions as part of a dystroglycan complex in Schwann cells, and as part of EZR and AHNAK-containing complexes in eye lens fiber cells. Required for the maintenance of the peripheral myelin sheath that is essential for normal transmission of nerve impulses and normal perception of sensory stimuli. Required for normal transport of MBP mRNA from the perinuclear to the paranodal regions. Required for normal remyelination after nerve injury. Required for normal elongation of Schwann cells and normal length of the internodes between the nodes of Ranvier. The demyelinated nodes of Ranvier permit saltatory transmission of nerve impulses; shorter internodes cause slower transmission of nerve impulses. Required for the formation of appositions between the abaxonal surface of the myelin sheath and the Schwann cell plasma membrane; the Schwann cell cytoplasm is restricted to regions between these appositions. Required for the formation of Cajal bands and of Schmidt-Lanterman incisures that correspond to short, cytoplasm-filled regions on myelinated nerves. Recruits DRP2 to the Schwann cell plasma membrane. Required for normal protein composition of the eye lens fiber cell plasma membrane and normal eye lens fiber cell morphology. The chain is Periaxin (Prx) from Rattus norvegicus (Rat).